We begin with the raw amino-acid sequence, 264 residues long: CD320 antigen (264 aa).

The first 28 residues, 1-28 (MARCGAGRAAALGLVLRLLLGLRTGPEA), serve as a signal peptide directing secretion. Residues 50 to 87 (SCPTDTFKCLTSGYCVPLSWRCDGDRDCSDGSDEEECR) form the LDL-receptor class A 1 domain. Intrachain disulfides connect C51-C64, C58-C77, and C71-C86. W69, D72, D74, D76, D82, and E83 together coordinate Ca(2+). Residue N122 is glycosylated (N-linked (GlcNAc...) asparagine). An LDL-receptor class A 2 domain is found at 127 to 164 (PCQEGELRCILDDVCIPHTWRCDGHPDCPDSSDELSCD). Intrachain disulfides connect C128-C141, C135-C154, and C148-C163. W146, D149, H151, D153, D159, and E160 together coordinate Ca(2+). An N-linked (GlcNAc...) asparagine glycan is attached at N195. The chain crosses the membrane as a helical span at residues 213–233 (VIAAAGVLSAILVSATILILL).

In terms of assembly, interacts (via LDL-receptor class A domains) with TCN2.

The protein localises to the cell membrane. Functionally, receptor for transcobalamin saturated with cobalamin (TCbl). Plays an important role in cobalamin uptake. Plasma membrane protein that is expressed on follicular dendritic cells (FDC) and mediates interaction with germinal center B cells. Functions as a costimulator to promote B cell responses to antigenic stimuli; promotes B cell differentiation and proliferation. Germinal center-B (GC-B) cells differentiate into memory B-cells and plasma cells (PC) through interaction with T-cells and follicular dendritic cells (FDC). CD320 augments the proliferation of PC precursors generated by IL-10. The polypeptide is CD320 antigen (Cd320) (Rattus norvegicus (Rat)).